The sequence spans 2555 residues: Neurogenic locus notch homolog protein 1 (2555 aa).

The first 18 residues, 1 to 18 (MPPLLAPLLCLALLPALA), serve as a signal peptide directing secretion. The Extracellular portion of the chain corresponds to 19–1735 (ARGPRCSQPG…VEPPPPAQLH (1717 aa)). EGF-like domains lie at 20 to 58 (RGPR…PRCQ), 59 to 99 (DPNP…PLCL), 102 to 139 (LDNA…KSCQ), and 140 to 176 (QADP…PTCR). Intrachain disulfides connect Cys-24-Cys-37, Cys-31-Cys-46, Cys-48-Cys-57, Cys-63-Cys-74, Cys-68-Cys-87, Cys-89-Cys-98, Cys-106-Cys-117, Cys-111-Cys-127, Cys-129-Cys-138, Cys-144-Cys-155, Cys-149-Cys-164, Cys-166-Cys-175, Cys-182-Cys-195, Cys-189-Cys-204, Cys-206-Cys-215, Cys-222-Cys-233, Cys-227-Cys-243, Cys-245-Cys-254, Cys-261-Cys-272, Cys-266-Cys-281, Cys-283-Cys-292, Cys-299-Cys-312, Cys-306-Cys-321, Cys-323-Cys-332, Cys-339-Cys-350, Cys-344-Cys-359, Cys-361-Cys-370, Cys-376-Cys-387, Cys-381-Cys-398, Cys-400-Cys-409, Cys-416-Cys-429, Cys-423-Cys-438, and Cys-440-Cys-449. A glycan (N-linked (GlcNAc...) asparagine) is linked at Asn-41. O-linked (Glc...) serine glycosylation occurs at Ser-65. An O-linked (Fuc...) threonine glycan is attached at Thr-73. O-linked (Fuc...) threonine glycosylation occurs at Thr-116. O-linked (Glc...) serine glycosylation is present at Ser-146. The EGF-like 5; calcium-binding domain maps to 178–216 (DVNECGQKPGLCRHGGTCHNEVGSYRCVCRATHTGPNCE). A glycan (O-linked (Fuc...) threonine) is linked at Thr-194. The 38-residue stretch at 218-255 (PYVPCSPSPCQNGGTCRPTGDVTHECACLPGFTGQNCE) folds into the EGF-like 6 domain. Thr-232 carries O-linked (Fuc...) threonine; alternate glycosylation. Residue Thr-232 is glycosylated (O-linked (GalNAc...) threonine; alternate). Residues 257–293 (NIDDCPGNNCKNGGACVDGVNTYNCRCPPEWTGQYCT) form the EGF-like 7; calcium-binding domain. Residues 295-333 (DVDECQLMPNACQNGGTCHNTHGGYNCVCVNGWTGEDCS) form the EGF-like 8; calcium-binding domain. The O-linked (Fuc...) threonine glycan is linked to Thr-311. Residues 335-371 (NIDDCASAACFHGATCHDRVASFYCECPHGRTGLLCH) form the EGF-like 9; calcium-binding domain. Ser-341 carries an O-linked (Glc...) serine glycan. A glycan (O-linked (Fuc...) threonine) is linked at Thr-349. Residues 372–410 (LNDACISNPCNEGSNCDTNPVNGKAICTCPSGYTGPACS) enclose the EGF-like 10 domain. Ser-378 carries O-linked (Glc...) serine glycosylation. Positions 412 to 450 (DVDECSLGANPCEHAGKCINTLGSFECQCLQGYTGPRCE) constitute an EGF-like 11; calcium-binding domain. The interaction with DLL4 stretch occupies residues 420–421 (AN). 2 residues coordinate Ca(2+): Thr-432 and Ser-435. O-linked (Glc...) serine glycosylation is present at Ser-435. The tract at residues 448-452 (RCEID) is interaction with DLL4. Asp-452, Val-453, and Glu-455 together coordinate Ca(2+). In terms of domain architecture, EGF-like 12; calcium-binding spans 452–488 (DVNECVSNPCQNDATCLDQIGEFQCICMPGYEGVHCE). 3 cysteine pairs are disulfide-bonded: Cys-456–Cys-467, Cys-461–Cys-476, and Cys-478–Cys-487. O-linked (Glc...) serine glycosylation is present at Ser-458. An O-linked (Fuc...) threonine glycan is attached at Thr-466. Ca(2+) is bound by residues Asp-469 and Gln-470. Positions 490, 491, and 493 each coordinate Ca(2+). The EGF-like 13; calcium-binding domain occupies 490–526 (NTDECASSPCLHNGRCLDKINEFQCECPTGFTGHLCQ). 74 disulfides stabilise this stretch: Cys-494–Cys-505, Cys-499–Cys-514, Cys-516–Cys-525, Cys-532–Cys-543, Cys-537–Cys-552, Cys-554–Cys-563, Cys-570–Cys-580, Cys-575–Cys-589, Cys-591–Cys-600, Cys-607–Cys-618, Cys-612–Cys-627, Cys-629–Cys-638, Cys-645–Cys-655, Cys-650–Cys-664, Cys-666–Cys-675, Cys-682–Cys-693, Cys-687–Cys-702, Cys-704–Cys-713, Cys-720–Cys-730, Cys-725–Cys-739, Cys-741–Cys-750, Cys-757–Cys-768, Cys-762–Cys-777, Cys-779–Cys-788, Cys-795–Cys-806, Cys-800–Cys-815, Cys-817–Cys-826, Cys-833–Cys-844, Cys-838–Cys-855, Cys-857–Cys-866, Cys-873–Cys-884, Cys-878–Cys-893, Cys-895–Cys-904, Cys-911–Cys-922, Cys-916–Cys-931, Cys-933–Cys-942, Cys-949–Cys-960, Cys-954–Cys-969, Cys-971–Cys-980, Cys-987–Cys-998, Cys-992–Cys-1007, Cys-1009–Cys-1018, Cys-1025–Cys-1036, Cys-1030–Cys-1045, Cys-1047–Cys-1056, Cys-1063–Cys-1074, Cys-1068–Cys-1083, Cys-1085–Cys-1094, Cys-1101–Cys-1122, Cys-1116–Cys-1131, Cys-1133–Cys-1142, Cys-1149–Cys-1160, Cys-1154–Cys-1169, Cys-1171–Cys-1180, Cys-1187–Cys-1198, Cys-1192–Cys-1207, Cys-1209–Cys-1218, Cys-1238–Cys-1253, Cys-1255–Cys-1264, Cys-1271–Cys-1284, Cys-1276–Cys-1293, Cys-1295–Cys-1304, Cys-1311–Cys-1322, Cys-1316–Cys-1334, Cys-1336–Cys-1345, Cys-1352–Cys-1363, Cys-1357–Cys-1372, Cys-1374–Cys-1383, Cys-1391–Cys-1403, Cys-1397–Cys-1414, Cys-1416–Cys-1425, Cys-1449–Cys-1472, Cys-1454–Cys-1467, and Cys-1463–Cys-1479. The O-linked (Glc...) serine glycan is linked to Ser-496. Asp-507 and Lys-508 together coordinate Ca(2+). The EGF-like 14; calcium-binding domain occupies 528–564 (DVDECASTPCKNGAKCLDGPNTYTCVCTEGYTGTHCE). Ser-534 carries O-linked (Glc...) serine glycosylation. The 36-residue stretch at 566–601 (DIDECDPDPCHYGSCKDGVATFTCLCRPGYTGHHCE) folds into the EGF-like 15; calcium-binding domain. Residues 603-639 (NINECSSQPCRHGGTCQDRDNAYLCFCLKGTTGPNCE) form the EGF-like 16; calcium-binding domain. O-linked (Glc...) serine glycosylation is present at Ser-609. O-linked (Fuc...) threonine glycosylation is present at Thr-617. In terms of domain architecture, EGF-like 17; calcium-binding spans 641-676 (NLDDCASSPCDSGTCLDKIDGYECACEPGYTGSMCN). O-linked (Glc...) serine glycosylation occurs at Ser-647. The EGF-like 18; calcium-binding domain maps to 678-714 (NIDECAGNPCHNGGTCEDGINGFTCRCPEGYHDPTCL). Thr-692 is a glycosylation site (O-linked (Fuc...) threonine). The EGF-like 19; calcium-binding domain maps to 716–751 (EVNECNSNPCVHGACRDSLNGYKCDCDPGWSGTNCD). Ser-722 is a glycosylation site (O-linked (Glc...) serine). In terms of domain architecture, EGF-like 20 spans 753–789 (NNNECESNPCVNGGTCKDMTSGYVCTCREGFSGPNCQ). Ser-759 is a glycosylation site (O-linked (Glc...) serine). A glycan (O-linked (Fuc...) threonine) is linked at Thr-767. O-linked (GlcNAc) serine glycosylation is present at Ser-784. The EGF-like 21; calcium-binding domain maps to 791 to 827 (NINECASNPCLNQGTCIDDVAGYKCNCLLPYTGATCE). The O-linked (Glc...) serine glycan is linked to Ser-797. A glycan (O-linked (Fuc...) threonine) is linked at Thr-805. In terms of domain architecture, EGF-like 22 spans 829–867 (VLAPCAPSPCRNGGECRQSEDYESFSCVCPTGWQGQTCE). The EGF-like 23; calcium-binding domain occupies 869–905 (DINECVLSPCRHGASCQNTHGGYRCHCQAGYSGRNCE). An EGF-like 24 domain is found at 907–943 (DIDDCRPNPCHNGGSCTDGINTAFCDCLPGFRGTFCE). Residue Ser-921 is glycosylated (O-linked (Fuc) serine). Residues 945–981 (DINECASDPCRNGANCTDCVDSYTCTCPAGFSGIHCE) enclose the EGF-like 25; calcium-binding domain. The O-linked (Glc...) serine glycan is linked to Ser-951. Asn-959 carries an N-linked (GlcNAc...) asparagine glycan. EGF-like domains are found at residues 983–1019 (NTPD…SYCQ), 1021–1057 (DVNE…PNCQ), 1059–1095 (LVHW…LYCD), 1097–1143 (PSVS…SYCE), and 1145–1181 (LVDE…VNCS). O-linked (Fuc...) threonine glycosylation occurs at Thr-997. A glycan (O-linked (Glc...) serine) is linked at Ser-1027. Thr-1035 carries an O-linked (Fuc...) threonine glycan. Ser-1065 carries O-linked (Glc...) serine glycosylation. An O-linked (Fuc...) threonine glycan is attached at Thr-1159. N-linked (GlcNAc...) asparagine glycosylation occurs at Asn-1179. Residues 1183–1219 (EIDECLSHPCQNGGTCLDLPNTYKCSCPRGTQGVHCE) enclose the EGF-like 31; calcium-binding domain. O-linked (Glc...) serine glycosylation is present at Ser-1189. Thr-1197 is a glycosylation site (O-linked (Fuc...) threonine). Positions 1221-1265 (NVDDCNPPVDPVSRSPKCFNNGTCVDQVGGYSCTCPPGFVGERCE) constitute an EGF-like 32; calcium-binding domain. Asn-1241 carries N-linked (GlcNAc...) asparagine glycosylation. EGF-like domains lie at 1267-1305 (DVNE…RRCE), 1307-1346 (VING…ATCE), 1348-1384 (DART…PECQ), and 1387-1426 (ASSP…LLCH). Ser-1273 is a glycosylation site (O-linked (Glc...) serine). Thr-1362 is a glycosylation site (O-linked (Fuc...) threonine). Thr-1379 carries O-linked (GlcNAc...) threonine glycosylation. Thr-1402 is a glycosylation site (O-linked (Fuc...) threonine; alternate). O-linked (GalNAc...) threonine; alternate glycosylation occurs at Thr-1402. 3 LNR repeats span residues 1449–1489 (CELP…PWKN), 1490–1531 (CTQS…CNPL), and 1532–1571 (YDQY…RLAA). 4 residues coordinate Ca(2+): Asp-1457, Asn-1460, Asp-1475, and Asp-1478. The N-linked (GlcNAc...) asparagine glycan is linked to Asn-1489. Intrachain disulfides connect Cys-1490–Cys-1514, Cys-1496–Cys-1509, Cys-1505–Cys-1521, Cys-1536–Cys-1549, and Cys-1545–Cys-1561. A glycan (N-linked (GlcNAc...) asparagine) is linked at Asn-1587. Residue Thr-1725 is glycosylated (O-linked (GalNAc...) threonine). The segment at 1728–1760 (PPPPAQLHFMYVAAAAFVLLFFVGCGVLLSRKR) is interaction with PSEN1. Residues 1736-1756 (FMYVAAAAFVLLFFVGCGVLL) traverse the membrane as a helical segment. At 1757-2555 (SRKRRRQHGQ…QIARIPEAFK (799 aa)) the chain is on the cytoplasmic side. A Glycyl lysine isopeptide (Lys-Gly) (interchain with G-Cter in ubiquitin) cross-link involves residue Lys-1759. The tract at residues 1780 to 1808 (KKKRREPLGEDSVGLKPLKNASDGALMDD) is disordered. At Thr-1861 the chain carries Phosphothreonine. 6 ANK repeats span residues 1927–1956 (TGET…DANI), 1960–1990 (MGRT…DLDA), 1994–2023 (DGTT…DVNA), 2027–2056 (LGKS…NKDM), 2060–2089 (REET…NRDI), and 2095–2122 (RLPR…VRSP). The segment at 1947-1955 (LLEASADAN) is HIF1AN-binding. The residue at position 1955 (Asn-1955) is a (3S)-3-hydroxyasparagine; by HIF1AN; partial. The interval 2014–2022 (LINSHADVN) is HIF1AN-binding. Residue Asn-2022 is modified to (3S)-3-hydroxyasparagine; by HIF1AN. Disordered regions lie at residues 2151-2194 (PGVQ…LDSS), 2379-2447 (LVQT…QPLG), and 2483-2555 (TPPS…EAFK). Residues 2379–2408 (LVQTQQVQPQNLQMQQQNLQPANIQQQQSL) are compositionally biased toward low complexity. Residues 2483-2502 (TPPSQHSYSSPVDNTPSHQL) are compositionally biased toward polar residues. The span at 2512-2527 (PSPESPDQWSSSSPHS) shows a compositional bias: low complexity. A compositionally biased stretch (polar residues) spans 2528-2547 (NVSDWSEGVSSPPTSMQSQI).

This sequence belongs to the NOTCH family. As to quaternary structure, heterodimer of a C-terminal fragment N(TM) and an N-terminal fragment N(EC) which are probably linked by disulfide bonds. Interacts with DNER, DTX1, DTX2 and RBPJ/RBPSUH. Also interacts with MAML1, MAML2 and MAML3 which act as transcriptional coactivators for NOTCH1. The NOTCH1 intracellular domain interacts with SNW1; the interaction involves multimerized NOTCH1 NICD and is implicated in a formation of an intermediate preactivation complex which associates with DNA-bound CBF-1/RBPJ. The activated membrane-bound form interacts with AAK1 which promotes NOTCH1 stabilization. Forms a trimeric complex with FBXW7 and SGK1. Interacts with HIF1AN. HIF1AN negatively regulates the function of notch intracellular domain (NICD), accelerating myogenic differentiation. Interacts (via NICD) with SNAI1 (via zinc fingers); the interaction induces SNAI1 degradation via MDM2-mediated ubiquitination and inhibits SNAI1-induced cell invasion. Interacts (via NICD) with MDM2A. Interacts (via NICD) with BCL6; the interaction decreases MAML1 recruitment by NOTCH1 NICD on target genes DNA and inhibits NOTCH1 transactivation activity. Interacts with THBS4. Interacts (via the EGF-like repeat region) with CCN3 (via CTCK domain). Interacts (via EGF-like domains) with DLL4 (via N-terminal DSL and MNNL domains). Interacts with ZMIZ1. Interacts (via NICD domain) with MEGF10 (via the cytoplasmic domain). Interacts with DLL1 and JAG1. Interacts (via NICD domain) with PRAG1. Forms a complex with PRAG1, N1ICD and MAML1, in a MAML1-dependent manner. Interacts (via transmembrane region) with PSEN1; the interaction is direct. Interacts with ZFP64. Post-translationally, synthesized in the endoplasmic reticulum as an inactive form which is proteolytically cleaved by a furin-like convertase in the trans-Golgi network before it reaches the plasma membrane to yield an active, ligand-accessible form. Cleavage results in a C-terminal fragment N(TM) and a N-terminal fragment N(EC). Following ligand binding, it is cleaved by ADAM17 to yield a membrane-associated intermediate fragment called notch extracellular truncation (NEXT). Following endocytosis, this fragment is then cleaved by one of the catalytic subunits of gamma-secretase (PSEN1 or PSEN2), to release a Notch-derived peptide containing the intracellular domain (NICD) from the membrane. In terms of processing, phosphorylated. O-glycosylated on the EGF-like domains. O-glucosylated at Ser-435 by KDELC1 and KDELC2. Contains both O-linked fucose and O-linked glucose in the EGF-like domains 11, 12 and 13, which are interacting with the residues on DLL4. O-linked glycosylation by GALNT11 is involved in determination of left/right symmetry: glycosylation promotes activation of NOTCH1, possibly by promoting cleavage by ADAM17, modulating the balance between motile and immotile (sensory) cilia at the left-right organiser (LRO). MFNG-, RFNG- and LFNG-mediated modification of O-fucose residues at specific EGF-like domains results in inhibition of its activation by JAG1 and enhancement of its activation by DLL1 via an increased binding to DLL1. Post-translationally, ubiquitinated. Undergoes 'Lys-29'-linked polyubiquitination by ITCH; promotes the lysosomal degradation of non-activated internalized NOTCH1. Deubiquitination by USP12 is required for transport of internalized non-activated receptor from late endosomes to lysosomes for degradation. Monoubiquitination at Lys-1759 is required for activation by gamma-secretase cleavage, it promotes interaction with AAK1, which stabilizes it. Deubiquitination by EIF3F is necessary for nuclear import of activated Notch. In terms of processing, hydroxylated at Asn-1955 by HIF1AN. Hydroxylated at Asn-2022 by HIF1AN. Hydroxylation reduces affinity for HI1AN and may thus indirectly modulate negative regulation of NICD. In terms of tissue distribution, in fetal tissues most abundant in spleen, brain stem and lung. Also present in most adult tissues where it is found mainly in lymphoid tissues.

The protein resides in the cell membrane. The protein localises to the late endosome membrane. It localises to the nucleus. Its function is as follows. Functions as a receptor for membrane-bound ligands Jagged-1 (JAG1), Jagged-2 (JAG2) and Delta-1 (DLL1) to regulate cell-fate determination. Upon ligand activation through the released notch intracellular domain (NICD) it forms a transcriptional activator complex with RBPJ/RBPSUH and activates genes of the enhancer of split locus. Affects the implementation of differentiation, proliferation and apoptotic programs. Involved in angiogenesis; negatively regulates endothelial cell proliferation and migration and angiogenic sprouting. Involved in the maturation of both CD4(+) and CD8(+) cells in the thymus. Important for follicular differentiation and possibly cell fate selection within the follicle. During cerebellar development, functions as a receptor for neuronal DNER and is involved in the differentiation of Bergmann glia. Represses neuronal and myogenic differentiation. May play an essential role in postimplantation development, probably in some aspect of cell specification and/or differentiation. May be involved in mesoderm development, somite formation and neurogenesis. May enhance HIF1A function by sequestering HIF1AN away from HIF1A. Required for the THBS4 function in regulating protective astrogenesis from the subventricular zone (SVZ) niche after injury. Involved in determination of left/right symmetry by modulating the balance between motile and immotile (sensory) cilia at the left-right organiser (LRO). The chain is Neurogenic locus notch homolog protein 1 (NOTCH1) from Homo sapiens (Human).